Reading from the N-terminus, the 396-residue chain is L-lactate dehydrogenase (396 aa).

The 380-residue stretch at 1–380 (MIISAASDYR…SGDSLVQELG (380 aa)) folds into the FMN hydroxy acid dehydrogenase domain. Tyr24 provides a ligand contact to substrate. The FMN site is built by Ser106 and Gln127. Residue Tyr129 coordinates substrate. Thr155 lines the FMN pocket. Residue Arg164 participates in substrate binding. Position 251 (Lys251) interacts with FMN. His275 (proton acceptor) is an active-site residue. Arg278 provides a ligand contact to substrate. 306 to 330 (DSGIRNGLDVVRMIALGADTVLLGR) provides a ligand contact to FMN.

The protein belongs to the FMN-dependent alpha-hydroxy acid dehydrogenase family. It depends on FMN as a cofactor.

It localises to the cell inner membrane. It catalyses the reaction (S)-lactate + A = pyruvate + AH2. Functionally, catalyzes the conversion of L-lactate to pyruvate. Is coupled to the respiratory chain. This Salmonella paratyphi A (strain ATCC 9150 / SARB42) protein is L-lactate dehydrogenase.